A 293-amino-acid chain; its full sequence is 33 kDa chaperonin (293 aa).

2 disulfide bridges follow: Cys239–Cys241 and Cys272–Cys275.

The protein belongs to the HSP33 family. In terms of processing, under oxidizing conditions two disulfide bonds are formed involving the reactive cysteines. Under reducing conditions zinc is bound to the reactive cysteines and the protein is inactive.

The protein localises to the cytoplasm. Redox regulated molecular chaperone. Protects both thermally unfolding and oxidatively damaged proteins from irreversible aggregation. Plays an important role in the bacterial defense system toward oxidative stress. This chain is 33 kDa chaperonin, found in Limosilactobacillus fermentum (strain NBRC 3956 / LMG 18251) (Lactobacillus fermentum).